The following is a 180-amino-acid chain: UPF0398 protein YpsA (180 aa).

This sequence belongs to the UPF0398 family.

The sequence is that of UPF0398 protein YpsA (ypsA) from Bacillus subtilis (strain 168).